Here is a 340-residue protein sequence, read N- to C-terminus: Protein RecA (340 aa).

Gly65–Thr72 contributes to the ATP binding site.

It belongs to the RecA family.

The protein localises to the cytoplasm. Its function is as follows. Can catalyze the hydrolysis of ATP in the presence of single-stranded DNA, the ATP-dependent uptake of single-stranded DNA by duplex DNA, and the ATP-dependent hybridization of homologous single-stranded DNAs. It interacts with LexA causing its activation and leading to its autocatalytic cleavage. The polypeptide is Protein RecA (Thermus thermophilus (strain ATCC BAA-163 / DSM 7039 / HB27)).